The sequence spans 353 residues: Methionine import ATP-binding protein MetN (353 aa).

Residues 7-249 (LENIDVTFKQ…PKEELSRQFV (243 aa)) form the ABC transporter domain. Residue 41–48 (GYSGAGKS) participates in ATP binding.

Belongs to the ABC transporter superfamily. Methionine importer (TC 3.A.1.24) family. As to quaternary structure, the complex is composed of two ATP-binding proteins (MetN), two transmembrane proteins (MetI) and a solute-binding protein (MetQ).

It is found in the cell membrane. The catalysed reaction is L-methionine(out) + ATP + H2O = L-methionine(in) + ADP + phosphate + H(+). The enzyme catalyses D-methionine(out) + ATP + H2O = D-methionine(in) + ADP + phosphate + H(+). Its function is as follows. Part of the ABC transporter complex MetNIQ involved in methionine import. Responsible for energy coupling to the transport system. The protein is Methionine import ATP-binding protein MetN of Ligilactobacillus salivarius (strain UCC118) (Lactobacillus salivarius).